The chain runs to 99 residues: Large ribosomal subunit protein uL23 (99 aa).

The protein belongs to the universal ribosomal protein uL23 family. In terms of assembly, part of the 50S ribosomal subunit. Contacts protein L29, and trigger factor when it is bound to the ribosome.

One of the early assembly proteins it binds 23S rRNA. One of the proteins that surrounds the polypeptide exit tunnel on the outside of the ribosome. Forms the main docking site for trigger factor binding to the ribosome. The chain is Large ribosomal subunit protein uL23 from Xanthomonas campestris pv. campestris (strain B100).